The sequence spans 367 residues: Phosphoribosylaminoimidazole-succinocarboxamide synthase (367 aa).

This sequence belongs to the SAICAR synthetase family.

The enzyme catalyses 5-amino-1-(5-phospho-D-ribosyl)imidazole-4-carboxylate + L-aspartate + ATP = (2S)-2-[5-amino-1-(5-phospho-beta-D-ribosyl)imidazole-4-carboxamido]succinate + ADP + phosphate + 2 H(+). It participates in purine metabolism; IMP biosynthesis via de novo pathway; 5-amino-1-(5-phospho-D-ribosyl)imidazole-4-carboxamide from 5-amino-1-(5-phospho-D-ribosyl)imidazole-4-carboxylate: step 1/2. The protein is Phosphoribosylaminoimidazole-succinocarboxamide synthase of Shewanella sp. (strain ANA-3).